The primary structure comprises 413 residues: 1-acylglycerol-3-phosphate O-acyltransferase Pnpla3 (413 aa).

Over 1 to 42 (MYDPERRWSLSFAGCGFLGFYHVGATLCLSERAPHLLRDART) the chain is Cytoplasmic. One can recognise a PNPLA domain in the interval 10-179 (LSFAGCGFLG…SDNVPVLDAK (170 aa)). The GXGXXG motif lies at 14-19 (GCGFLG). The chain crosses the membrane as a helical; Signal-anchor for type II membrane protein span at residues 43–63 (FFGCSAGALHAVTFVCSLPLG). Positions 45-49 (GCSAG) match the GXSXG motif. The Nucleophile role is filled by Ser-47. Residues 64–413 (RIMEILMDLV…HKPQGNSAGL (350 aa)) are Lumenal-facing. The active-site Proton acceptor is the Asp-166. Residues 166–168 (DGG) carry the DGA/G motif. N-linked (GlcNAc...) asparagine glycans are attached at residues Asn-206 and Asn-209. Positions 389 to 413 (KDDHRMLKHGHHPSPHKPQGNSAGL) are disordered. Over residues 394–403 (MLKHGHHPSP) the composition is skewed to basic residues.

Restricted to adipose tissue. Expressed in inguinal and epididymal white adipose tissues and in interscapular brown adipose tissue. Also expressed in liver in response to high-sucrose diet.

It is found in the membrane. The protein localises to the lipid droplet. It carries out the reaction a 1-acyl-sn-glycero-3-phosphate + an acyl-CoA = a 1,2-diacyl-sn-glycero-3-phosphate + CoA. The enzyme catalyses a triacylglycerol + H2O = a diacylglycerol + a fatty acid + H(+). The catalysed reaction is a 1-acylglycerol + a 1,3-diacylglycerol = a triacylglycerol + glycerol. It catalyses the reaction a 1-acylglycerol + a 1,2-diacylglycerol = a triacylglycerol + glycerol. It carries out the reaction 2 a 1-acylglycerol = a 1,2-diacylglycerol + glycerol. The enzyme catalyses 1-(9Z-octadecenoyl)-sn-glycero-3-phosphate + (9Z)-octadecenoyl-CoA = 1,2-di-(9Z-octadecenoyl)-sn-glycero-3-phosphate + CoA. The catalysed reaction is 1-(9Z-octadecenoyl)-sn-glycero-3-phosphate + hexadecanoyl-CoA = 1-(9Z)-octadecenoyl-2-hexadecanoyl-sn-glycero-3-phosphate + CoA. It catalyses the reaction 1-(9Z-octadecenoyl)-sn-glycero-3-phosphate + (9Z,12Z)-octadecadienoyl-CoA = 1-(9Z)-octadecenoyl-2-(9Z,12Z)-octadecadienoyl-sn-glycero-3-phosphate + CoA. It carries out the reaction 1-(9Z-octadecenoyl)-sn-glycero-3-phosphate + (5Z,8Z,11Z,14Z)-eicosatetraenoyl-CoA = 1-(9Z)-octadecenoyl-2-(5Z,8Z,11Z,14Z)-eicosatetraenoyl-sn-glycero-3-phosphate + CoA. The enzyme catalyses 2 1-(9Z-octadecenoyl)-glycerol = 1,2-di-(9Z-octadecenoyl)-glycerol + glycerol. The catalysed reaction is 1-(9Z-octadecenoyl)-glycerol + 1,2-di-(9Z-octadecenoyl)-glycerol = 1,2,3-tri-(9Z-octadecenoyl)-glycerol + glycerol. It catalyses the reaction 1-(9Z-octadecenoyl)-glycerol + 1,3-di-(9Z-octadecenoyl)-glycerol = 1,2,3-tri-(9Z-octadecenoyl)-glycerol + glycerol. It carries out the reaction 1,2,3-tri-(9Z-octadecenoyl)-glycerol + H2O = 1,3-di-(9Z-octadecenoyl)-glycerol + (9Z)-octadecenoate + H(+). The enzyme catalyses a 1,2-diacyl-sn-glycero-3-phosphocholine + H2O = a 1-acyl-sn-glycero-3-phosphocholine + a fatty acid + H(+). It participates in phospholipid metabolism. It functions in the pathway glycerolipid metabolism. Its function is as follows. Specifically catalyzes coenzyme A (CoA)-dependent acylation of 1-acyl-sn-glycerol 3-phosphate (2-lysophosphatidic acid/LPA) to generate phosphatidic acid (PA), an important metabolic intermediate and precursor for both triglycerides and glycerophospholipids. Does not esterify other lysophospholipids. Acyl donors are long chain (at least C16) fatty acyl-CoAs: arachidonoyl-CoA, linoleoyl-CoA, oleoyl-CoA and at a lesser extent palmitoyl-CoA. Additionally possesses low triacylglycerol lipase and CoA-independent acylglycerol transacylase activities and thus may play a role in acyl-chain remodeling of triglycerides. In vitro may express hydrolytic activity against glycerolipids triacylglycerol, diacylglycerol and monoacylglycerol, with a strong preference for oleic acid as the acyl moiety. However, the triacylglycerol hydrolase activity is controversial and may be very low. Possesses phospholipase A2 activity. The protein is 1-acylglycerol-3-phosphate O-acyltransferase Pnpla3 of Mus musculus (Mouse).